The sequence spans 215 residues: MGKGDPKKPRGKMSSYAFFVQTCREEHKKKHPDASVNFSEFSKKCSERWKTMSSKEKGKFEDMAKADKLRYEKEMKNYVPPKGETKKKFKDPNAPKRPPSAFFLFCSEFRPKIKGEHPGLSIGDVAKKLGEMWNNTAADDKQPYEKKAAKLKEKYEKDIAAYRAKGKVDAGKKVVAKAEKSKKKKEEEEDEDEDEEDEEDEEEEEEEEEDDDDDE.

Positions 9–79 (PRGKMSSYAF…RYEKEMKNYV (71 aa)) form a DNA-binding region, HMG box 1. C23 bears the Cysteine sulfonic acid (-SO3H); alternate mark. C23 and C45 are disulfide-bonded. The segment at 27–43 (HKKKHPDASVNFSEFSK) is NLS 1. The Nuclear localization signal (NLS) 1 signature appears at 27–43 (HKKKHPDASVNFSEFSK). C45 carries the post-translational modification Cysteine sulfonic acid (-SO3H); alternate. The interval 75–95 (MKNYVPPKGETKKKFKDPNAP) is disordered. The span at 83–94 (GETKKKFKDPNA) shows a compositional bias: basic and acidic residues. The HMG box 2 DNA-binding region spans 95–163 (PKRPPSAFFL…KYEKDIAAYR (69 aa)). A Cysteine sulfonic acid (-SO3H) modification is found at C106. Residues 166–179 (GKVDAGKKVVAKAE) show a composition bias toward basic and acidic residues. A disordered region spans residues 166 to 215 (GKVDAGKKVVAKAEKSKKKKEEEEDEDEDEEDEEDEEEEEEEEEDDDDDE). The NLS 2 stretch occupies residues 178-184 (AEKSKKK). The Nuclear localization signal (NLS) 2 motif lies at 178 to 184 (AEKSKKK). The segment covering 187 to 215 (EEEDEDEDEEDEEDEEEEEEEEEDDDDDE) has biased composition (acidic residues). Residues 196 to 210 (EDEEDEEEEEEEEED) are involved in intramolecular interaction with K-3. Residues 211–215 (DDDDE) are involved in interaction with histone H3.

The protein belongs to the HMGB family. Reduction/oxidation of cysteine residues Cys-23, Cys-45 and Cys-106 and a possible intramolecular disulfide bond involving Cys-23 and Cys-45 give rise to different redox forms with specific functional activities: 1- fully reduced HMGB1 (HMGB1C23hC45hC106h), 2- disulfide HMGB1 (HMGB1C23-C45C106h) and 3- sulfonyl HMGB1 (HMGB1C23soC45soC106so).

The protein resides in the nucleus. It localises to the chromosome. Its subcellular location is the cytoplasm. It is found in the secreted. Functionally, multifunctional redox sensitive protein with various roles in different cellular compartments. Nuclear functions are attributed to fully reduced HGMB1. Associates with chromatin and binds DNA with a preference to non-canonical DNA structures such as single-stranded DNA, DNA-containing cruciforms or bent structures, supercoiled DNA and ZDNA. Can bent DNA and enhance DNA flexibility by looping thus providing a mechanism to promote activities on various gene promoters. Can restructure the canonical nucleosome. Proposed to be an universal biosensor for nucleic acids. May promote inflammatory response to sterile and infectious signals and may be involved in the coordination and integration of innate and adaptive immune responses. In the cytoplasm may function as sensor and/or chaperone for immunogenic nucleic acids, and mediate autophagy. May act as danger associated molecular pattern (DAMP) molecule that amplifies immune responses during tissue injury. This Gallus gallus (Chicken) protein is High mobility group protein B1 (HMGB1).